The following is a 468-amino-acid chain: BTB and MATH domain-containing protein 45 (468 aa).

Residues 7–124 enclose the MATH domain; the sequence is VFELSHVFKD…DDSIIIEVLV (118 aa). BTB domains lie at 148 to 215 and 304 to 368; these read SDGI…IDDD and SDVI…IDDL.

This is BTB and MATH domain-containing protein 45 (bath-45) from Caenorhabditis elegans.